Consider the following 169-residue polypeptide: Eukaryotic translation initiation factor 5A-2 (169 aa).

Lysine 64 is modified (hypusine).

Belongs to the eIF-5A family. Post-translationally, lys-51 undergoes hypusination, a unique post-translational modification that consists in the addition of a butylamino group from spermidine to lysine side chain, leading to the formation of the unusual amino acid hypusine. eIF-5As are the only known proteins to undergo this modification, which is essential for their function.

The protein localises to the cytoplasm. The protein resides in the nucleus. Its function is as follows. Translation factor that promotes translation elongation and termination, particularly upon ribosome stalling at specific amino acid sequence contexts. Binds between the exit (E) and peptidyl (P) site of the ribosome and promotes rescue of stalled ribosome: specifically required for efficient translation of polyproline-containing peptides as well as other motifs that stall the ribosome. Acts as a ribosome quality control (RQC) cofactor by joining the RQC complex to facilitate peptidyl transfer during CAT tailing step. In Schizosaccharomyces pombe (strain 972 / ATCC 24843) (Fission yeast), this protein is Eukaryotic translation initiation factor 5A-2 (tif51b).